Here is a 188-residue protein sequence, read N- to C-terminus: Ribosomal RNA small subunit methyltransferase G (188 aa).

Residues Gly-69, Phe-74, 119–120, and Arg-134 each bind S-adenosyl-L-methionine; that span reads VQ.

The protein belongs to the methyltransferase superfamily. RNA methyltransferase RsmG family.

Its subcellular location is the cytoplasm. The enzyme catalyses guanosine(527) in 16S rRNA + S-adenosyl-L-methionine = N(7)-methylguanosine(527) in 16S rRNA + S-adenosyl-L-homocysteine. Functionally, specifically methylates the N7 position of guanine in position 527 of 16S rRNA. The protein is Ribosomal RNA small subunit methyltransferase G of Campylobacter jejuni subsp. doylei (strain ATCC BAA-1458 / RM4099 / 269.97).